We begin with the raw amino-acid sequence, 162 residues long: Small ribosomal subunit protein uS7m (162 aa).

Belongs to the universal ribosomal protein uS7 family. As to quaternary structure, part of the small ribosomal subunit.

It localises to the mitochondrion. Functionally, one of the primary rRNA binding proteins, it binds directly to 16S-like rRNA where it nucleates assembly of the head domain of the small subunit. The polypeptide is Small ribosomal subunit protein uS7m (mrps7) (Dictyostelium discoideum (Social amoeba)).